The following is a 374-amino-acid chain: Chaperone protein DnaJ (374 aa).

A J domain is found at 5 to 70 (CYYEILNVSK…SKRSRYDQFG (66 aa)). The CR-type zinc-finger motif lies at 130 to 207 (GVEKEITIPR…CYGNGKVKKQ (78 aa)). Positions 143, 146, 159, 162, 181, 184, 195, and 198 each coordinate Zn(2+). CXXCXGXG motif repeat units lie at residues 143-150 (CDSCDGTG), 159-166 (CHACHGQG), 181-188 (CPVCNGTG), and 195-202 (CDACYGNG).

The protein belongs to the DnaJ family. In terms of assembly, homodimer. Requires Zn(2+) as cofactor.

It localises to the cytoplasm. Participates actively in the response to hyperosmotic and heat shock by preventing the aggregation of stress-denatured proteins and by disaggregating proteins, also in an autonomous, DnaK-independent fashion. Unfolded proteins bind initially to DnaJ; upon interaction with the DnaJ-bound protein, DnaK hydrolyzes its bound ATP, resulting in the formation of a stable complex. GrpE releases ADP from DnaK; ATP binding to DnaK triggers the release of the substrate protein, thus completing the reaction cycle. Several rounds of ATP-dependent interactions between DnaJ, DnaK and GrpE are required for fully efficient folding. Also involved, together with DnaK and GrpE, in the DNA replication of plasmids through activation of initiation proteins. The protein is Chaperone protein DnaJ of Francisella tularensis subsp. tularensis (strain FSC 198).